The sequence spans 160 residues: Cytochrome b6-f complex subunit 4 (160 aa).

Transmembrane regions (helical) follow at residues 36–56 (LLYI…GLAV), 95–115 (LLGV…PFLE), and 131–151 (TVFL…TLPI).

Belongs to the cytochrome b family. PetD subfamily. The 4 large subunits of the cytochrome b6-f complex are cytochrome b6, subunit IV (17 kDa polypeptide, petD), cytochrome f and the Rieske protein, while the 4 small subunits are petG, petL, petM and petN. The complex functions as a dimer.

It is found in the plastid. The protein resides in the chloroplast thylakoid membrane. Its function is as follows. Component of the cytochrome b6-f complex, which mediates electron transfer between photosystem II (PSII) and photosystem I (PSI), cyclic electron flow around PSI, and state transitions. The sequence is that of Cytochrome b6-f complex subunit 4 from Oryza sativa (Rice).